The primary structure comprises 196 residues: Adenylate kinase (196 aa).

9–17 (GIPGVGKST) is an ATP binding site.

The protein belongs to the archaeal adenylate kinase family.

The protein localises to the cytoplasm. It carries out the reaction AMP + ATP = 2 ADP. In Thermococcus sibiricus (strain DSM 12597 / MM 739), this protein is Adenylate kinase.